Reading from the N-terminus, the 73-residue chain is Protein WFDC10B (73 aa).

A signal peptide spans 1–21 (MAPQTLLLVLVLCVLLLQAQG). A WAP domain is found at 28–73 (RMQRIKVCEKRPSIDLCIHHCSYFQKCETNKICCSAFCGNICMSIL).

In terms of tissue distribution, ubiquitously expressed.

It localises to the secreted. The protein is Protein WFDC10B (WFDC10B) of Homo sapiens (Human).